Reading from the N-terminus, the 470-residue chain is E3 ubiquitin-protein ligase TRIM21 (470 aa).

The segment at 20-59 (CSICLDPMVEPMSIECGHCFCKECIFEVGKNGGSSCPECR) adopts an RING-type zinc-finger fold. Residues Cys-96, His-99, Cys-118, and His-124 each coordinate Zn(2+). Residues 96–127 (CMKHGEKLHLFCEEDGQALCWVCAQSGKHRDH) form a B box-type zinc finger. A coiled-coil region spans residues 188–250 (LQNSLLAQEE…RGSELELLQE (63 aa)). In terms of domain architecture, B30.2/SPRY spans 272 to 470 (DLTSTCPVPG…APLKLCPLKM (199 aa)).

It belongs to the TRIM/RBCC family. In terms of assembly, homotrimer. Component of a SCF(SKP2)-like complex containing CUL1, SKP1, TRIM21 and SKP2. Interacts with CALR, CUL1, FBXW11, HSPA5, IKBKB, IRF3, SKP1 and VCP. Interacts with SKP2; the interaction with SKP2 does not depend on an intact F-box domain. Interacts (via N-terminus and C-terminus) with DCP2 (via N-terminus and C-terminus). Interacts (via C-terminus) with IRF8 (via C-terminus). Interacts with ULK1, BECN1 and with ATG8 family members, including GABARAP, GABARAPL1, GABARAPL2 and MAP1LC3C/LC3C. Interacts with TRIM21 and SQSTM1/sequestosome 1. Interacts with IRF3. Interacts (via the SPRY domain) with NMI (via coiled-coil domain); the interaction promotes 'Lys-63'-linked ubiquitination of NMI. Interacts with IFI35 and NMI; the interaction facilitates NMI-IFI35 complex formation. Post-translationally, autoubiquitinated; does not lead to its proteasomal degradation. Deubiquitinated by USP4; leading to its stabilization. Autoubiquitinated.

It localises to the cytoplasm. Its subcellular location is the cytoplasmic vesicle. It is found in the autophagosome. The protein resides in the nucleus. The protein localises to the P-body. It localises to the stress granule. The catalysed reaction is S-ubiquitinyl-[E2 ubiquitin-conjugating enzyme]-L-cysteine + [acceptor protein]-L-lysine = [E2 ubiquitin-conjugating enzyme]-L-cysteine + N(6)-ubiquitinyl-[acceptor protein]-L-lysine.. The protein operates within protein modification; protein ubiquitination. In terms of biological role, E3 ubiquitin-protein ligase whose activity is dependent on E2 enzymes, UBE2D1, UBE2D2, UBE2E1 and UBE2E2. Forms a ubiquitin ligase complex in cooperation with the E2 UBE2D2 that is used not only for the ubiquitination of USP4 and IKBKB but also for its self-ubiquitination. Component of cullin-RING-based SCF (SKP1-CUL1-F-box protein) E3 ubiquitin-protein ligase complexes such as SCF(SKP2)-like complexes. A TRIM21-containing SCF(SKP2)-like complex is shown to mediate ubiquitination of CDKN1B ('Thr-187' phosphorylated-form), thereby promoting its degradation by the proteasome. Monoubiquitinates IKBKB that will negatively regulates Tax-induced NF-kappa-B signaling. Negatively regulates IFN-beta production post-pathogen recognition by catalyzing polyubiquitin-mediated degradation of IRF3. Mediates the ubiquitin-mediated proteasomal degradation of IgG1 heavy chain, which is linked to the VCP-mediated ER-associated degradation (ERAD) pathway. Promotes IRF8 ubiquitination, which enhanced the ability of IRF8 to stimulate cytokine genes transcription in macrophages. Plays a role in the regulation of the cell cycle progression. Enhances the decapping activity of DCP2. Exists as a ribonucleoprotein particle present in all mammalian cells studied and composed of a single polypeptide and one of four small RNA molecules. At least two isoforms are present in nucleated and red blood cells, and tissue specific differences in RO/SSA proteins have been identified. The common feature of these proteins is their ability to bind HY RNAs.2. Involved in the regulation of innate immunity and the inflammatory response in response to IFNG/IFN-gamma. Organizes autophagic machinery by serving as a platform for the assembly of ULK1, Beclin 1/BECN1 and ATG8 family members and recognizes specific autophagy targets, thus coordinating target recognition with assembly of the autophagic apparatus and initiation of autophagy. Also regulates autophagy through FIP200/RB1CC1 ubiquitination and subsequent decreased protein stability. Represses the innate antiviral response by facilitating the formation of the NMI-IFI35 complex through 'Lys-63'-linked ubiquitination of NMI. During viral infection, promotes cell pyroptosis by mediating 'Lys-6'-linked ubiquitination of ISG12a/IFI27, facilitating its translocation into the mitochondria and subsequent CASP3 activation. When up-regulated through the IFN/JAK/STAT signaling pathway, promotes 'Lys-27'-linked ubiquitination of MAVS, leading to the recruitment of TBK1 and up-regulation of innate immunity. Mediates 'Lys-63'-linked polyubiquitination of G3BP1 in response to heat shock, leading to stress granule disassembly. In Mus musculus (Mouse), this protein is E3 ubiquitin-protein ligase TRIM21 (Trim21).